The following is a 553-amino-acid chain: Hyaluronan synthase 3 (553 aa).

Over 1 to 15 (MPVQLTTALRVVGTS) the chain is Cytoplasmic. The chain crosses the membrane as a helical span at residues 16–36 (LFALAVLGGILAAYVTGYQFI). The Extracellular portion of the chain corresponds to 37–44 (HTEKHYLS). The chain crosses the membrane as a helical span at residues 45-65 (FGLYGAILGLHLLIQSLFAFL). The Cytoplasmic segment spans residues 66 to 377 (EHRRMRRAGQ…NSLWFHKHHL (312 aa)). A helical transmembrane segment spans residues 378 to 398 (WMTYESVVTGFFPFFLIATVI). Topologically, residues 399 to 408 (QLFYRGRIWN) are extracellular. The helical transmembrane segment at 409-429 (ILLFLLTVQLVGIIKATYACF) threads the bilayer. Residues 430–440 (LRGNAEMIFMS) are Cytoplasmic-facing. The helical transmembrane segment at 441–461 (LYSLLYMSSLLPAKIFAIATI) threads the bilayer. An N-linked (GlcNAc...) asparagine glycan is attached at asparagine 462. Residues 462–473 (NKSGWGTSGRKT) are Extracellular-facing. A helical transmembrane segment spans residues 474 to 494 (IVVNFIGLIPVSIWVAVLLGG). At 495–515 (LAYTAYCQDLFSETELAFLVS) the chain is on the cytoplasmic side. A helical transmembrane segment spans residues 516–536 (GAILYGCYWVALLMLYLAIIA). At 537 to 553 (RRCGKKPEQYSLAFAEV) the chain is on the extracellular side.

Belongs to the NodC/HAS family. As to quaternary structure, homodimers. Forms heterodimers with HAS2 and HAS1. Requires Mg(2+) as cofactor. Post-translationally, O-GlcNAcylation increases the hyaluronan synthase activity, HAS3 stability and its plasma membrane residence. The concentration of UDP-GlcNAc controls the level of O-GlcNAc modification.

The protein localises to the cell membrane. Its subcellular location is the golgi apparatus membrane. It is found in the golgi apparatus. The protein resides in the trans-Golgi network membrane. It localises to the early endosome. The catalysed reaction is [hyaluronan](n) + UDP-N-acetyl-alpha-D-glucosamine = N-acetyl-beta-D-glucosaminyl-(1-&gt;4)-[hyaluronan](n) + UDP + H(+). It catalyses the reaction N-acetyl-beta-D-glucosaminyl-(1-&gt;4)-[hyaluronan](n) + UDP-alpha-D-glucuronate = [hyaluronan](n+1) + UDP + H(+). It participates in glycan biosynthesis; hyaluronan biosynthesis. Its activity is regulated as follows. The enzymatic activity depends on the availability of cytosolic levels of UDP-GlcUA and UDP-GlcNAc. Functionally, catalyzes the addition of GlcNAc or GlcUA monosaccharides to the nascent hyaluronan polymer. Therefore, it is essential to hyaluronan synthesis a major component of most extracellular matrices that has a structural role in tissues architectures and regulates cell adhesion, migration and differentiation. This is one of three isoenzymes responsible for cellular hyaluronan synthesis. The polypeptide is Hyaluronan synthase 3 (Homo sapiens (Human)).